Reading from the N-terminus, the 59-residue chain is Conorfamide-Vc1 (59 aa).

The N-terminal stretch at 1–19 (MSGRGFLLLALLLLVTVEA) is a signal peptide. The propeptide occupies 20–25 (TKVEKK). Residues 32 to 39 (AWSGPRNR) form a positively charged region crucial for activity against MRGPRX1 receptors region. A Phenylalanine amide modification is found at F43. A propeptide spanning residues 45–59 (RRDMQSPLLSERLRL) is cleaved from the precursor.

Belongs to the FARP (FMRFamide related peptide) family. Expressed by the venom duct.

The protein localises to the secreted. In terms of biological role, this peptide activates human and mouse sensory neuron-specific G-protein coupled receptors MRGPRX1. The activity on human receptors has been measured (EC(50)=1.8 uM). Compared with the agonist chloroquine (anti-malaria drug), it is 200-fold more potent. The peptide also causes an increase in cytosolic calcium in a specific subset of DRG neurons, and, in contrast to other Conus venom peptides, the peptide also affects a large fraction of the non-neuronal cells. In vivo, when intracranially injected into mice, it principally renders mice unable to move, and at very low doses, it causes hyperactivity. It also induces itch sensation, since intradermal cheek injection into humanized transgenic mouse (mouse MRGPRX1 replaced by human MRGPRX1) induces scratching. In vivo, when tested at high doses (10 uM) on zebrafish larvae, it induces a range of behavioral effects ranging from an early hypoactivity during the first hour of treatment to an increase in movement during the following hours when the larvae are submitted to strobe light phases. The protein is Conorfamide-Vc1 of Conus victoriae (Queen Victoria cone).